The following is a 321-amino-acid chain: Endochitinase 33 (321 aa).

An N-terminal signal peptide occupies residues 1 to 19 (MPSLTALASLLALVPSALA). In terms of domain architecture, GH18 spans 27-321 (QNIAVYWGQN…FETQVVNALR (295 aa)). Glu-167 acts as the Proton donor in catalysis.

This sequence belongs to the glycosyl hydrolase 18 family. Chitinase class III subfamily. In terms of assembly, monomer.

It localises to the secreted. It catalyses the reaction Random endo-hydrolysis of N-acetyl-beta-D-glucosaminide (1-&gt;4)-beta-linkages in chitin and chitodextrins.. Secreted chitinase involved in the degradation of chitin, a component of the cell walls of fungi and exoskeletal elements of some animals (including worms and arthropods). Plays a morphogenetic role during apical growth, cell division and differentiation (cell wall morphogenesis). May be involved in the degradation and further assimilation of phytopathogenic fungi, namely mycoparasitism, the major mechanism accounting for the antagonistic activity against phytopathogenic fungi displayed by Trichoderma. In Trichoderma harzianum (Hypocrea lixii), this protein is Endochitinase 33 (chit33).